A 128-amino-acid polypeptide reads, in one-letter code: RutC family protein BUsg_359 (128 aa).

It belongs to the RutC family.

In Buchnera aphidicola subsp. Schizaphis graminum (strain Sg), this protein is RutC family protein BUsg_359.